A 140-amino-acid chain; its full sequence is Small ribosomal subunit protein uS12m (140 aa).

Residues 1–30 constitute a mitochondrion transit peptide; it reads MNFLRQSFGITKQLASQAIQCSYETAVRGM.

Belongs to the universal ribosomal protein uS12 family.

The protein resides in the mitochondrion. This chain is Small ribosomal subunit protein uS12m (tko), found in Drosophila melanogaster (Fruit fly).